The sequence spans 142 residues: Hemoglobin subunit beta-1 (142 aa).

Residues 2–142 (SLTDEEIRLI…VTEALSCQYH (141 aa)) enclose the Globin domain. 2 residues coordinate heme b: H59 and H88.

It belongs to the globin family. Heterotetramer of two alpha chains and two beta chains. Red blood cells.

Its function is as follows. Involved in oxygen transport from the lung to the various peripheral tissues. The polypeptide is Hemoglobin subunit beta-1 (HBB1) (Torpedo marmorata (Marbled electric ray)).